A 560-amino-acid chain; its full sequence is Membrane protein insertase YidC (560 aa).

6 helical membrane-spanning segments follow: residues 5–25 (IINL…WQYF), 334–354 (AIDF…MNFF), 357–377 (YVGN…LLMF), 431–451 (LPIL…YVTI), 476–496 (LFGL…WPIL), and 522–542 (FMPL…LIYW).

Belongs to the OXA1/ALB3/YidC family. Type 1 subfamily. As to quaternary structure, interacts with the Sec translocase complex via SecD. Specifically interacts with transmembrane segments of nascent integral membrane proteins during membrane integration.

The protein localises to the cell inner membrane. Its function is as follows. Required for the insertion and/or proper folding and/or complex formation of integral membrane proteins into the membrane. Involved in integration of membrane proteins that insert both dependently and independently of the Sec translocase complex, as well as at least some lipoproteins. Aids folding of multispanning membrane proteins. In Rickettsia felis (strain ATCC VR-1525 / URRWXCal2) (Rickettsia azadi), this protein is Membrane protein insertase YidC.